The sequence spans 387 residues: Erythronate-4-phosphate dehydrogenase (387 aa).

Positions 45 and 67 each coordinate substrate. Asp-147 serves as a coordination point for NAD(+). The active site involves Arg-208. Asp-232 is a binding site for NAD(+). Glu-237 is an active-site residue. The Proton donor role is filled by His-254. Gly-257 lines the NAD(+) pocket. Tyr-258 is a binding site for substrate.

Belongs to the D-isomer specific 2-hydroxyacid dehydrogenase family. PdxB subfamily. As to quaternary structure, homodimer.

The protein resides in the cytoplasm. It catalyses the reaction 4-phospho-D-erythronate + NAD(+) = (R)-3-hydroxy-2-oxo-4-phosphooxybutanoate + NADH + H(+). It functions in the pathway cofactor biosynthesis; pyridoxine 5'-phosphate biosynthesis; pyridoxine 5'-phosphate from D-erythrose 4-phosphate: step 2/5. Its function is as follows. Catalyzes the oxidation of erythronate-4-phosphate to 3-hydroxy-2-oxo-4-phosphonooxybutanoate. This chain is Erythronate-4-phosphate dehydrogenase, found in Shewanella sediminis (strain HAW-EB3).